Here is a 137-residue protein sequence, read N- to C-terminus: Phosphoribosyl-AMP cyclohydrolase (137 aa).

Mg(2+) is bound at residue Asp-84. Residue Cys-85 participates in Zn(2+) binding. Residues Asp-86 and Asp-88 each contribute to the Mg(2+) site. Residues Cys-101 and Cys-108 each contribute to the Zn(2+) site.

This sequence belongs to the PRA-CH family. As to quaternary structure, homodimer. Mg(2+) serves as cofactor. The cofactor is Zn(2+).

It is found in the cytoplasm. It catalyses the reaction 1-(5-phospho-beta-D-ribosyl)-5'-AMP + H2O = 1-(5-phospho-beta-D-ribosyl)-5-[(5-phospho-beta-D-ribosylamino)methylideneamino]imidazole-4-carboxamide. It functions in the pathway amino-acid biosynthesis; L-histidine biosynthesis; L-histidine from 5-phospho-alpha-D-ribose 1-diphosphate: step 3/9. Catalyzes the hydrolysis of the adenine ring of phosphoribosyl-AMP. The protein is Phosphoribosyl-AMP cyclohydrolase of Pelodictyon phaeoclathratiforme (strain DSM 5477 / BU-1).